Reading from the N-terminus, the 263-residue chain is Acetylglutamate kinase (263 aa).

Residues 48-49, Arg70, and Asn162 each bind substrate; that span reads GG.

This sequence belongs to the acetylglutamate kinase family. ArgB subfamily.

It is found in the cytoplasm. The catalysed reaction is N-acetyl-L-glutamate + ATP = N-acetyl-L-glutamyl 5-phosphate + ADP. The protein operates within amino-acid biosynthesis; L-arginine biosynthesis; N(2)-acetyl-L-ornithine from L-glutamate: step 2/4. In terms of biological role, catalyzes the ATP-dependent phosphorylation of N-acetyl-L-glutamate. This is Acetylglutamate kinase from Vibrio parahaemolyticus serotype O3:K6 (strain RIMD 2210633).